We begin with the raw amino-acid sequence, 618 residues long: Elongation factor 4 (618 aa).

The 182-residue stretch at 17 to 198 (AIIRNFCIIA…KIVRDLPAPE (182 aa)) folds into the tr-type G domain. GTP contacts are provided by residues 29-34 (DHGKST) and 145-148 (NKID).

Belongs to the TRAFAC class translation factor GTPase superfamily. Classic translation factor GTPase family. LepA subfamily.

It localises to the cell membrane. The catalysed reaction is GTP + H2O = GDP + phosphate + H(+). Its function is as follows. Required for accurate and efficient protein synthesis under certain stress conditions. May act as a fidelity factor of the translation reaction, by catalyzing a one-codon backward translocation of tRNAs on improperly translocated ribosomes. Back-translocation proceeds from a post-translocation (POST) complex to a pre-translocation (PRE) complex, thus giving elongation factor G a second chance to translocate the tRNAs correctly. Binds to ribosomes in a GTP-dependent manner. In Pseudarthrobacter chlorophenolicus (strain ATCC 700700 / DSM 12829 / CIP 107037 / JCM 12360 / KCTC 9906 / NCIMB 13794 / A6) (Arthrobacter chlorophenolicus), this protein is Elongation factor 4.